The primary structure comprises 159 residues: Phosphopantetheine adenylyltransferase (159 aa).

S9 lines the substrate pocket. ATP contacts are provided by residues 9-10 (SF) and H17. The substrate site is built by K41, L73, and K87. Residues 88–90 (GLR), E98, and 123–129 (YSYLSSS) contribute to the ATP site.

This sequence belongs to the bacterial CoaD family. Homohexamer. Mg(2+) is required as a cofactor.

The protein localises to the cytoplasm. It catalyses the reaction (R)-4'-phosphopantetheine + ATP + H(+) = 3'-dephospho-CoA + diphosphate. The protein operates within cofactor biosynthesis; coenzyme A biosynthesis; CoA from (R)-pantothenate: step 4/5. Its function is as follows. Reversibly transfers an adenylyl group from ATP to 4'-phosphopantetheine, yielding dephospho-CoA (dPCoA) and pyrophosphate. This chain is Phosphopantetheine adenylyltransferase, found in Clostridium botulinum (strain Eklund 17B / Type B).